Consider the following 242-residue polypeptide: Interleukin-34 (242 aa).

Positions methionine 1–glycine 20 are cleaved as a signal peptide. Asparagine 76 carries an N-linked (GlcNAc...) asparagine glycan. A disordered region spans residues threonine 210–proline 242. A compositionally biased stretch (pro residues) spans tyrosine 213–proline 223.

This sequence belongs to the IL-34 family. Homodimer. Interacts with CSF1R. As to expression, detected in the sinusoidal epithelium in the red pulp of spleen (at protein level). Predominantly expressed in spleen. Also detected in a range of other tissues including heart, brain, lung, liver, kidney, thymus, testis, ovary, small intestine, prostate and colon.

Its subcellular location is the secreted. Cytokine that promotes the proliferation, survival and differentiation of monocytes and macrophages. Promotes the release of pro-inflammatory chemokines, and thereby plays an important role in innate immunity and in inflammatory processes. Plays an important role in the regulation of osteoclast proliferation and differentiation, and in the regulation of bone resorption. Signaling via CSF1R and its downstream effectors stimulates phosphorylation of MAPK1/ERK2 AND MAPK3/ERK1. This chain is Interleukin-34 (IL34), found in Homo sapiens (Human).